The primary structure comprises 313 residues: Porphobilinogen deaminase (313 aa).

At C242 the chain carries S-(dipyrrolylmethanemethyl)cysteine.

Belongs to the HMBS family. Monomer. The cofactor is dipyrromethane.

It catalyses the reaction 4 porphobilinogen + H2O = hydroxymethylbilane + 4 NH4(+). It participates in porphyrin-containing compound metabolism; protoporphyrin-IX biosynthesis; coproporphyrinogen-III from 5-aminolevulinate: step 2/4. Its function is as follows. Tetrapolymerization of the monopyrrole PBG into the hydroxymethylbilane pre-uroporphyrinogen in several discrete steps. The protein is Porphobilinogen deaminase of Marinobacter nauticus (strain ATCC 700491 / DSM 11845 / VT8) (Marinobacter aquaeolei).